A 337-amino-acid polypeptide reads, in one-letter code: MQTRFVSPVNHDEEQDEPSVRPGLLADFIGQDSIKDALTVAITSARKRNKPLDHILFSGPPGLGKTTLAHIIAQEMNSHIETTSGPVLDRPGDLAALLTPLKDRDFLFIDEIHRLSPVIEEILYPAMEDYTIDLLIGEGPSARTIQLPLERFTLIGATTRLGLLGSPFRDRFGIILRLDLYDPSELTVIVTRSAGILGIPITPEGAAEIAGRSRGTPRIANRLLKRAYDYAIVRGTGSIDQNIANTALFALGVDQKGLDILDRRILEVIANDFDGGPVGLKTISISVGEEPRTIEDVYEPYLIRIGFLKRTPQGRMITSAARDHLGNSHTRDLTSFL.

A disordered region spans residues 1-20; that stretch reads MQTRFVSPVNHDEEQDEPSV. The segment at 1-181 is large ATPase domain (RuvB-L); it reads MQTRFVSPVN…FGIILRLDLY (181 aa). ATP is bound by residues R21, G62, K65, T66, T67, 128 to 130, R171, Y181, and R218; that span reads EDY. T66 contributes to the Mg(2+) binding site. The interval 182–252 is small ATPAse domain (RuvB-S); sequence DPSELTVIVT…IANTALFALG (71 aa). A head domain (RuvB-H) region spans residues 255–337; that stretch reads QKGLDILDRR…SHTRDLTSFL (83 aa). The DNA site is built by R310 and R315.

This sequence belongs to the RuvB family. As to quaternary structure, homohexamer. Forms an RuvA(8)-RuvB(12)-Holliday junction (HJ) complex. HJ DNA is sandwiched between 2 RuvA tetramers; dsDNA enters through RuvA and exits via RuvB. An RuvB hexamer assembles on each DNA strand where it exits the tetramer. Each RuvB hexamer is contacted by two RuvA subunits (via domain III) on 2 adjacent RuvB subunits; this complex drives branch migration. In the full resolvosome a probable DNA-RuvA(4)-RuvB(12)-RuvC(2) complex forms which resolves the HJ.

Its subcellular location is the cytoplasm. It catalyses the reaction ATP + H2O = ADP + phosphate + H(+). Its function is as follows. The RuvA-RuvB-RuvC complex processes Holliday junction (HJ) DNA during genetic recombination and DNA repair, while the RuvA-RuvB complex plays an important role in the rescue of blocked DNA replication forks via replication fork reversal (RFR). RuvA specifically binds to HJ cruciform DNA, conferring on it an open structure. The RuvB hexamer acts as an ATP-dependent pump, pulling dsDNA into and through the RuvAB complex. RuvB forms 2 homohexamers on either side of HJ DNA bound by 1 or 2 RuvA tetramers; 4 subunits per hexamer contact DNA at a time. Coordinated motions by a converter formed by DNA-disengaged RuvB subunits stimulates ATP hydrolysis and nucleotide exchange. Immobilization of the converter enables RuvB to convert the ATP-contained energy into a lever motion, pulling 2 nucleotides of DNA out of the RuvA tetramer per ATP hydrolyzed, thus driving DNA branch migration. The RuvB motors rotate together with the DNA substrate, which together with the progressing nucleotide cycle form the mechanistic basis for DNA recombination by continuous HJ branch migration. Branch migration allows RuvC to scan DNA until it finds its consensus sequence, where it cleaves and resolves cruciform DNA. The sequence is that of Holliday junction branch migration complex subunit RuvB from Methanospirillum hungatei JF-1 (strain ATCC 27890 / DSM 864 / NBRC 100397 / JF-1).